Reading from the N-terminus, the 176-residue chain is Urease accessory protein UreE (176 aa).

The protein belongs to the UreE family.

Its subcellular location is the cytoplasm. Involved in urease metallocenter assembly. Binds nickel. Probably functions as a nickel donor during metallocenter assembly. The polypeptide is Urease accessory protein UreE (Helicobacter bizzozeronii).